The chain runs to 321 residues: Digestive cysteine proteinase 3 (321 aa).

The N-terminal stretch at 1 to 16 is a signal peptide; the sequence is MKVAALFLCGLALATA. A propeptide spans 17–106 (activation peptide); the sequence is SPSWDHFKTQ…AVFTAEAGPM (90 aa). Disulfide bonds link cysteine 127-cysteine 170, cysteine 161-cysteine 203, and cysteine 261-cysteine 310. Cysteine 130 is an active-site residue. Active-site residues include histidine 268 and asparagine 288.

It belongs to the peptidase C1 family.

Its activity is regulated as follows. Inhibited by E-64, antipain, leupeptin, heavy metal ions, iodoacetic acid, dithionitrobenzene, p-hydroxymercuri-benzoate; activated by mercaptoethanol and dithiothreitol. This chain is Digestive cysteine proteinase 3 (LCP3), found in Homarus americanus (American lobster).